Here is a 62-residue protein sequence, read N- to C-terminus: Photosystem II reaction center protein Z (62 aa).

2 helical membrane-spanning segments follow: residues 8-28 (AVFA…VVFA) and 41-61 (FSGT…NSLI).

This sequence belongs to the PsbZ family. PSII is composed of 1 copy each of membrane proteins PsbA, PsbB, PsbC, PsbD, PsbE, PsbF, PsbH, PsbI, PsbJ, PsbK, PsbL, PsbM, PsbT, PsbY, PsbZ, Psb30/Ycf12, at least 3 peripheral proteins of the oxygen-evolving complex and a large number of cofactors. It forms dimeric complexes.

The protein resides in the plastid. Its subcellular location is the chloroplast thylakoid membrane. May control the interaction of photosystem II (PSII) cores with the light-harvesting antenna, regulates electron flow through the 2 photosystem reaction centers. PSII is a light-driven water plastoquinone oxidoreductase, using light energy to abstract electrons from H(2)O, generating a proton gradient subsequently used for ATP formation. This is Photosystem II reaction center protein Z from Liriodendron tulipifera (Tuliptree).